A 757-amino-acid polypeptide reads, in one-letter code: LPS-assembly protein LptD (757 aa).

The signal sequence occupies residues methionine 1–alanine 21.

This sequence belongs to the LptD family. Component of the lipopolysaccharide transport and assembly complex. Interacts with LptE and LptA.

The protein localises to the cell outer membrane. Functionally, together with LptE, is involved in the assembly of lipopolysaccharide (LPS) at the surface of the outer membrane. The protein is LPS-assembly protein LptD of Alkalilimnicola ehrlichii (strain ATCC BAA-1101 / DSM 17681 / MLHE-1).